Reading from the N-terminus, the 335-residue chain is DNA-directed RNA polymerase RPB7 homolog (335 aa).

It belongs to the Asfivirus DNA-directed RNA polymerase RPB7 homolog family. Part of the viral DNA-directed RNA polymerase that consists of 8 polII-like subunits (RPB1, RPB2, RPB3, RPB5, RPB6, RPB7, RPB9, RPB10), a capping enzyme and a termination factor.

It localises to the host cytoplasm. The protein resides in the virion. Functionally, component of the DNA-directed RNA polymerase (RNAP) that catalyzes the transcription in the cytoplasm of viral DNA into RNA using the four ribonucleoside triphosphates as substrates. The protein is DNA-directed RNA polymerase RPB7 homolog of African swine fever virus (isolate Pig/Kenya/KEN-50/1950) (ASFV).